The primary structure comprises 344 residues: AA9 family lytic polysaccharide monooxygenase J (344 aa).

Positions 1–20 (MKSSLLVVLTAGLAVRDAIA) are cleaved as a signal peptide. Positions 21 and 99 each coordinate Cu(2+). Cysteine 58 and cysteine 194 are disulfide-bonded. Residues histidine 180 and glutamine 189 each contribute to the O2 site. Residue tyrosine 191 coordinates Cu(2+). The interval 272-301 (PGGKPASGGSDGNAPEVAEPSGGEGSPSAP) is disordered. The segment covering 285-301 (APEVAEPSGGEGSPSAP) has biased composition (low complexity). The 38-residue stretch at 304–341 (CEVAAYGQCGGDQYSGCTQCASGYTCKAVSPPYYSQCA) folds into the CBM1 domain.

It belongs to the polysaccharide monooxygenase AA9 family. Cu(2+) is required as a cofactor.

It localises to the secreted. The enzyme catalyses [(1-&gt;4)-beta-D-glucosyl]n+m + reduced acceptor + O2 = 4-dehydro-beta-D-glucosyl-[(1-&gt;4)-beta-D-glucosyl]n-1 + [(1-&gt;4)-beta-D-glucosyl]m + acceptor + H2O.. Its function is as follows. Lytic polysaccharide monooxygenase (LPMO) that depolymerizes crystalline and amorphous polysaccharides via the oxidation of scissile alpha- or beta-(1-4)-glycosidic bonds, yielding C4 oxidation products. Catalysis by LPMOs requires the reduction of the active-site copper from Cu(II) to Cu(I) by a reducing agent and H(2)O(2) or O(2) as a cosubstrate. This Neurospora crassa (strain ATCC 24698 / 74-OR23-1A / CBS 708.71 / DSM 1257 / FGSC 987) protein is AA9 family lytic polysaccharide monooxygenase J (gh61-10).